Consider the following 450-residue polypeptide: 23S rRNA (uracil(1939)-C(5))-methyltransferase RlmD (450 aa).

The 59-residue stretch at 15 to 73 folds into the TRAM domain; that stretch reads KAVPAKNLTVTVASLDPFGQGVARHEGKTVFVTGVLPGEQAEVQLTEEKRQFSHAKLKR. [4Fe-4S] cluster is bound by residues Cys86, Cys92, Cys95, and Cys173. S-adenosyl-L-methionine-binding residues include Gln276, Phe305, Asn310, Glu326, Asn353, and Asp374. Cys400 (nucleophile) is an active-site residue.

Belongs to the class I-like SAM-binding methyltransferase superfamily. RNA M5U methyltransferase family. RlmD subfamily.

The catalysed reaction is uridine(1939) in 23S rRNA + S-adenosyl-L-methionine = 5-methyluridine(1939) in 23S rRNA + S-adenosyl-L-homocysteine + H(+). In terms of biological role, catalyzes the formation of 5-methyl-uridine at position 1939 (m5U1939) in 23S rRNA. The polypeptide is 23S rRNA (uracil(1939)-C(5))-methyltransferase RlmD (Pectobacterium atrosepticum (strain SCRI 1043 / ATCC BAA-672) (Erwinia carotovora subsp. atroseptica)).